The chain runs to 103 residues: Putative membrane protein insertion efficiency factor (103 aa).

The protein belongs to the UPF0161 family.

It is found in the cell inner membrane. Functionally, could be involved in insertion of integral membrane proteins into the membrane. In Chlamydia felis (strain Fe/C-56) (Chlamydophila felis), this protein is Putative membrane protein insertion efficiency factor.